The sequence spans 198 residues: Altered inheritance of mitochondria protein 34, mitochondrial (198 aa).

Residues 1–55 (MSISLFGRIVSQQFSGIRAAGPGRSLYLPFTLLLKQPGAYKVSLHRYVHSTQTKS) constitute a mitochondrion transit peptide. The 35-residue stretch at 69-103 (FQKFTVKVLKEQCKSRGLKLSGRKSDLLQRLITHD) folds into the SAP domain. The helical transmembrane segment at 172-187 (IFLLGFFMLSCLWWNL) threads the bilayer.

It belongs to the AIM34 family.

Its subcellular location is the mitochondrion membrane. This chain is Altered inheritance of mitochondria protein 34, mitochondrial (AIM34), found in Saccharomyces cerevisiae (strain JAY291) (Baker's yeast).